Consider the following 345-residue polypeptide: S-adenosylmethionine:tRNA ribosyltransferase-isomerase (345 aa).

Belongs to the QueA family. In terms of assembly, monomer.

The protein localises to the cytoplasm. It catalyses the reaction 7-aminomethyl-7-carbaguanosine(34) in tRNA + S-adenosyl-L-methionine = epoxyqueuosine(34) in tRNA + adenine + L-methionine + 2 H(+). It functions in the pathway tRNA modification; tRNA-queuosine biosynthesis. In terms of biological role, transfers and isomerizes the ribose moiety from AdoMet to the 7-aminomethyl group of 7-deazaguanine (preQ1-tRNA) to give epoxyqueuosine (oQ-tRNA). This Anaeromyxobacter dehalogenans (strain 2CP-1 / ATCC BAA-258) protein is S-adenosylmethionine:tRNA ribosyltransferase-isomerase.